The chain runs to 505 residues: Cyclin-dependent kinase C-1 (505 aa).

The Protein kinase domain occupies Phe-26–Phe-325. Residues Ile-32–Val-40 and Lys-55 contribute to the ATP site. A Phosphotyrosine modification is found at Tyr-37. Asp-164 acts as the Proton acceptor in catalysis. A Phosphothreonine modification is found at Thr-198. Residues Ser-336–Gln-505 form a disordered region. Over residues Pro-429 to Gly-456 the composition is skewed to low complexity. The segment covering Gly-482–Gly-491 has biased composition (gly residues). Positions Arg-492–Gln-505 are enriched in low complexity.

It belongs to the protein kinase superfamily. CMGC Ser/Thr protein kinase family. CDC2/CDKX subfamily. In terms of assembly, interacts with CYCT1-3. In terms of tissue distribution, highly expressed in flowers. Expressed in seedlings, roots, rosettes and stems.

The enzyme catalyses L-seryl-[protein] + ATP = O-phospho-L-seryl-[protein] + ADP + H(+). The catalysed reaction is L-threonyl-[protein] + ATP = O-phospho-L-threonyl-[protein] + ADP + H(+). It carries out the reaction [DNA-directed RNA polymerase] + ATP = phospho-[DNA-directed RNA polymerase] + ADP + H(+). The sequence is that of Cyclin-dependent kinase C-1 (CDKC-1) from Arabidopsis thaliana (Mouse-ear cress).